The following is a 285-amino-acid chain: AT-hook motif nuclear-localized protein 21 (285 aa).

The interval 17 to 95 (DGGGGGQFTT…GSKNKPKPPV (79 aa)) is disordered. The segment covering 39-50 (NHHHHHHNHNHH) has biased composition (basic residues). Residues 63 to 73 (GLGGGGGGGSG) show a composition bias toward gly residues. Residues 78–90 (RRPRGRPAGSKNK) constitute a DNA-binding region (a.T hook). Residues 102 to 238 (ANTLRAHILE…EHEEHLQSGG (137 aa)) form the PPC domain.

In terms of tissue distribution, preferentially expressed in roots, but also in flowers and leaves. Detected in the inflorescence meristem, floral primordia and developing reproductive organs.

It is found in the nucleus. The protein localises to the nucleoplasm. Transcription factor that specifically binds AT-rich DNA sequences related to the nuclear matrix attachment regions (MARs). Binds to the MARs present in the ETTIN (ETT) promoter leading to a negative regulation of its gene expression. Functions as a molecular node downstream of the homeotic protein AGAMOUS (AG), regulating patterning and differentiation of reproductive organs. Acts as a chromatin remodeling factor that modifies the architecture of ETTIN (ETT) chromatin by modulating H3 methylation leading to the regulation of ETT expression. Seems to be involved in the regulation of a set of reproductives genes including CRABS CLAW (CRC), JAGGED (JAG) and KNUCKLES (KNU). The polypeptide is AT-hook motif nuclear-localized protein 21 (Arabidopsis thaliana (Mouse-ear cress)).